A 277-amino-acid polypeptide reads, in one-letter code: Diaminopimelate epimerase (277 aa).

Asparagine 11 and asparagine 62 together coordinate substrate. Catalysis depends on cysteine 71, which acts as the Proton donor. Residues 72-73 (GN), asparagine 160, asparagine 193, and 211-212 (ER) contribute to the substrate site. Cysteine 220 serves as the catalytic Proton acceptor. Position 221–222 (221–222 (GT)) interacts with substrate.

The protein belongs to the diaminopimelate epimerase family. Homodimer.

It is found in the cytoplasm. It catalyses the reaction (2S,6S)-2,6-diaminopimelate = meso-2,6-diaminopimelate. The protein operates within amino-acid biosynthesis; L-lysine biosynthesis via DAP pathway; DL-2,6-diaminopimelate from LL-2,6-diaminopimelate: step 1/1. Catalyzes the stereoinversion of LL-2,6-diaminopimelate (L,L-DAP) to meso-diaminopimelate (meso-DAP), a precursor of L-lysine. The chain is Diaminopimelate epimerase from Methanococcus maripaludis (strain C5 / ATCC BAA-1333).